Here is a 351-residue protein sequence, read N- to C-terminus: Nicotinate-nucleotide--dimethylbenzimidazole phosphoribosyltransferase (351 aa).

The active-site Proton acceptor is glutamate 317.

It belongs to the CobT family.

The catalysed reaction is 5,6-dimethylbenzimidazole + nicotinate beta-D-ribonucleotide = alpha-ribazole 5'-phosphate + nicotinate + H(+). Its pathway is nucleoside biosynthesis; alpha-ribazole biosynthesis; alpha-ribazole from 5,6-dimethylbenzimidazole: step 1/2. Functionally, catalyzes the synthesis of alpha-ribazole-5'-phosphate from nicotinate mononucleotide (NAMN) and 5,6-dimethylbenzimidazole (DMB). This is Nicotinate-nucleotide--dimethylbenzimidazole phosphoribosyltransferase from Pseudomonas putida (strain ATCC 47054 / DSM 6125 / CFBP 8728 / NCIMB 11950 / KT2440).